A 275-amino-acid chain; its full sequence is Dermonecrotic toxin LhSicTox-alphaIV2 (275 aa).

H5 is a catalytic residue. Mg(2+) is bound by residues E25 and D27. H41 (nucleophile) is an active-site residue. Intrachain disulfides connect C45-C51 and C47-C192. Residue D85 participates in Mg(2+) binding.

Belongs to the arthropod phospholipase D family. Class II subfamily. Requires Mg(2+) as cofactor. In terms of tissue distribution, expressed by the venom gland.

The protein localises to the secreted. It carries out the reaction an N-(acyl)-sphingosylphosphocholine = an N-(acyl)-sphingosyl-1,3-cyclic phosphate + choline. It catalyses the reaction an N-(acyl)-sphingosylphosphoethanolamine = an N-(acyl)-sphingosyl-1,3-cyclic phosphate + ethanolamine. The catalysed reaction is a 1-acyl-sn-glycero-3-phosphocholine = a 1-acyl-sn-glycero-2,3-cyclic phosphate + choline. The enzyme catalyses a 1-acyl-sn-glycero-3-phosphoethanolamine = a 1-acyl-sn-glycero-2,3-cyclic phosphate + ethanolamine. Functionally, dermonecrotic toxins cleave the phosphodiester linkage between the phosphate and headgroup of certain phospholipids (sphingolipid and lysolipid substrates), forming an alcohol (often choline) and a cyclic phosphate. This toxin acts on sphingomyelin (SM). It may also act on ceramide phosphoethanolamine (CPE), lysophosphatidylcholine (LPC) and lysophosphatidylethanolamine (LPE), but not on lysophosphatidylserine (LPS), and lysophosphatidylglycerol (LPG). It acts by transphosphatidylation, releasing exclusively cyclic phosphate products as second products. Induces dermonecrosis, hemolysis, increased vascular permeability, edema, inflammatory response, and platelet aggregation. The sequence is that of Dermonecrotic toxin LhSicTox-alphaIV2 from Loxosceles hirsuta (Recluse spider).